A 468-amino-acid chain; its full sequence is 3-isopropylmalate dehydratase large subunit (468 aa).

[4Fe-4S] cluster contacts are provided by C349, C409, and C412.

This sequence belongs to the aconitase/IPM isomerase family. LeuC type 1 subfamily. As to quaternary structure, heterodimer of LeuC and LeuD. [4Fe-4S] cluster serves as cofactor.

It catalyses the reaction (2R,3S)-3-isopropylmalate = (2S)-2-isopropylmalate. It functions in the pathway amino-acid biosynthesis; L-leucine biosynthesis; L-leucine from 3-methyl-2-oxobutanoate: step 2/4. Functionally, catalyzes the isomerization between 2-isopropylmalate and 3-isopropylmalate, via the formation of 2-isopropylmaleate. This Shewanella baltica (strain OS155 / ATCC BAA-1091) protein is 3-isopropylmalate dehydratase large subunit.